Here is a 350-residue protein sequence, read N- to C-terminus: Protein RecA (350 aa).

Glycine 68–threonine 75 provides a ligand contact to ATP.

It belongs to the RecA family.

The protein resides in the cytoplasm. Functionally, can catalyze the hydrolysis of ATP in the presence of single-stranded DNA, the ATP-dependent uptake of single-stranded DNA by duplex DNA, and the ATP-dependent hybridization of homologous single-stranded DNAs. It interacts with LexA causing its activation and leading to its autocatalytic cleavage. The protein is Protein RecA of Symbiobacterium thermophilum (strain DSM 24528 / JCM 14929 / IAM 14863 / T).